The sequence spans 1385 residues: Serine-aspartate repeat-containing protein D (1385 aa).

An N-terminal signal peptide occupies residues 1-35 (MLNRENKTAITRKGMVSNRLNKFSIRKYTVGTASI). Positions 23–34 (FSIRKYTVGTAS) match the YSIRK-G/S signaling motif motif. A ligand binding A region region spans residues 36–568 (LVGTTLIFGL…NNQSGGAGQE (533 aa)). Disordered stretches follow at residues 54–162 (ESTN…DLLE) and 200–224 (ETLVDNNSNSNNENNADIILPKSTA). 2 stretches are compositionally biased toward polar residues: residues 62–71 (EATTSASDNQ) and 94–109 (EMVSSQGNETTSNGNK). Positions 130–145 (KSDEQASPKSTNEDLN) are enriched in basic and acidic residues. The segment covering 146 to 155 (TKQTISNQEG) has biased composition (polar residues). Over residues 205-214 (NNSNSNNENN) the composition is skewed to low complexity. 5 CNA-B domains span residues 569-680 (VYKI…IYKP), 681-791 (KYNL…YKTP), 792-901 (KYNL…FYKP), 902-1012 (TYNL…YKTP), and 1013-1123 (KYSL…EEET). 3 disordered regions span residues 856–886 (FETPSGYTPTQVGSGTDEGIDSNGTSTTGVI), 972–992 (YTPTSVTSGNDTEKDSNGLTT), and 1077–1361 (FEKP…SNNA). Composition is skewed to polar residues over residues 860-869 (SGYTPTQVGS) and 972-981 (YTPTSVTSGN). The span at 1081–1090 (TGLTQTGTNT) shows a compositional bias: low complexity. 2 stretches are compositionally biased toward acidic residues: residues 1091-1101 (TEDDKDADGGE) and 1118-1324 (YYEE…DSDS). The LPXTG sorting signal signature appears at 1348 to 1352 (LPETG). Position 1351 is a pentaglycyl murein peptidoglycan amidated threonine (Thr-1351). Residues 1352–1385 (GNENSGSNNATLFGGLFAALGSLLLFGRRKKQNK) constitute a propeptide, removed by sortase.

Belongs to the serine-aspartate repeat-containing protein (SDr) family. In terms of assembly, interacts with host DSG1; this interaction increases S.aureus adherence to keratinocytes.

It localises to the secreted. The protein localises to the cell wall. Its function is as follows. Cell surface-associated calcium-binding protein which plays an important role in adhesion and pathogenesis. Mediates interactions with components of the extracellular matrix such as host DSG1 to promote bacterial adhesion to host cells. Contributes to the resistance to killing by innate immune components such as neutrophils present in blood and thus attenuates bacterial clearance. In Staphylococcus aureus (strain Mu50 / ATCC 700699), this protein is Serine-aspartate repeat-containing protein D (sdrD).